The primary structure comprises 407 residues: Dephospho-CoA kinase (407 aa).

The DPCK domain maps to 3 to 201 (RIGLTGGIGA…ERIVPFAHNL (199 aa)). 11 to 16 (GAGKSA) serves as a coordination point for ATP. The UPF0157 stretch occupies residues 196–407 (PFAHNLSTRQ…DWADSTGWKP (212 aa)).

The protein in the N-terminal section; belongs to the CoaE family. This sequence in the C-terminal section; belongs to the UPF0157 (GrpB) family.

The protein localises to the cytoplasm. The enzyme catalyses 3'-dephospho-CoA + ATP = ADP + CoA + H(+). It participates in cofactor biosynthesis; coenzyme A biosynthesis; CoA from (R)-pantothenate: step 5/5. Catalyzes the phosphorylation of the 3'-hydroxyl group of dephosphocoenzyme A to form coenzyme A. This is Dephospho-CoA kinase from Mycolicibacterium paratuberculosis (strain ATCC BAA-968 / K-10) (Mycobacterium paratuberculosis).